The following is a 337-amino-acid chain: Glyceraldehyde-3-phosphate dehydrogenase (337 aa).

NAD(+)-binding positions include Arg12–Ile13, Asp34, and Arg79. D-glyceraldehyde 3-phosphate-binding positions include Ser150–Thr152, Thr181, Thr210–Gly211, and Arg233. The Nucleophile role is filled by Cys151. Asn315 is an NAD(+) binding site.

This sequence belongs to the glyceraldehyde-3-phosphate dehydrogenase family. Homotetramer.

The protein resides in the cytoplasm. The enzyme catalyses D-glyceraldehyde 3-phosphate + phosphate + NAD(+) = (2R)-3-phospho-glyceroyl phosphate + NADH + H(+). Its pathway is carbohydrate degradation; glycolysis; pyruvate from D-glyceraldehyde 3-phosphate: step 1/5. In Ajellomyces capsulatus (Darling's disease fungus), this protein is Glyceraldehyde-3-phosphate dehydrogenase (GPD).